A 350-amino-acid polypeptide reads, in one-letter code: tRNA dimethylallyltransferase (350 aa).

The segment at 1–20 (MMNTERPAGPLRPPHPPHPP) is disordered. Residues 10-20 (PLRPPHPPHPP) are compositionally biased toward pro residues. 27–34 (GPTASGKT) is an ATP binding site. Position 29–34 (29–34 (TASGKT)) interacts with substrate. Interaction with substrate tRNA regions lie at residues 52–55 (DSAL), 176–180 (QRIAR), and 273–278 (RCVGYR).

This sequence belongs to the IPP transferase family. As to quaternary structure, monomer. Requires Mg(2+) as cofactor.

It carries out the reaction adenosine(37) in tRNA + dimethylallyl diphosphate = N(6)-dimethylallyladenosine(37) in tRNA + diphosphate. Functionally, catalyzes the transfer of a dimethylallyl group onto the adenine at position 37 in tRNAs that read codons beginning with uridine, leading to the formation of N6-(dimethylallyl)adenosine (i(6)A). The polypeptide is tRNA dimethylallyltransferase (Albidiferax ferrireducens (strain ATCC BAA-621 / DSM 15236 / T118) (Rhodoferax ferrireducens)).